Consider the following 534-residue polypeptide: Glucans biosynthesis protein D (534 aa).

A signal peptide (tat-type signal) is located at residues 1 to 30 (MRMQRRHLLKNAAAALAALGLPALPQWALA).

Belongs to the OpgD/OpgG family. Predicted to be exported by the Tat system. The position of the signal peptide cleavage has not been experimentally proven.

Its subcellular location is the periplasm. Its pathway is glycan metabolism; osmoregulated periplasmic glucan (OPG) biosynthesis. Its function is as follows. Probably involved in the control of the structural glucose backbone of osmoregulated periplasmic glucans (OPGs). The chain is Glucans biosynthesis protein D from Xanthomonas oryzae pv. oryzae (strain KACC10331 / KXO85).